The sequence spans 182 residues: Adenine phosphoribosyltransferase (182 aa).

Belongs to the purine/pyrimidine phosphoribosyltransferase family. Homodimer.

It is found in the cytoplasm. The enzyme catalyses AMP + diphosphate = 5-phospho-alpha-D-ribose 1-diphosphate + adenine. It functions in the pathway purine metabolism; AMP biosynthesis via salvage pathway; AMP from adenine: step 1/1. Functionally, catalyzes a salvage reaction resulting in the formation of AMP, that is energically less costly than de novo synthesis. The chain is Adenine phosphoribosyltransferase from Campylobacter jejuni subsp. doylei (strain ATCC BAA-1458 / RM4099 / 269.97).